Reading from the N-terminus, the 409-residue chain is MGSSSLSEDYRLCLERELRRGRAGVCGDPSLRAVLWHILVEDFDLHGALQDDALALLTDGLWGRADLAPALRGLARAFELLELAAVHLYLLPWRKEFTTIKTFSGGYVHVLKGALSEDLLIQSFQKMGYVRRDAHRLMVAALPPARQLVQVALGCFALRLECEILGEVLAQLGTSVLPAEELLQARRASVDVASCVAWLQQRLAREEEPPPLPRRGSPTGCQARLDLYRDVQEDEGSDEASLYGGPSPGPDSPTSELACQPRFWEQSARLWGAGGGPWEPAEVSSPTSGASEEEEPQPEAFSFLSLRRELLSRPGDLAPPHAPRSPEQASPPPIPEPPGYQMHTCLAPGALPALCCDTCRQLHAAHCAALPSCHPGHSLRTLRGNSQRRLWLQRAQVDALLYDSPAAGP.

3 disordered regions span residues 233–257, 270–299, and 313–337; these read EDEG…TSEL, LWGA…PQPE, and RPGD…IPEP.

The protein belongs to the SPATA2 family.

This chain is Spermatogenesis-associated protein 2-like protein (SPATA2L), found in Bos taurus (Bovine).